We begin with the raw amino-acid sequence, 154 residues long: Protein X (154 aa).

A mitochondrial targeting sequence region spans residues 68-117 (PCALRFTSARCMATTVNAHQILPKVLHKRTLGLPAMSTTDLEAYFKDCLF).

The protein belongs to the orthohepadnavirus protein X family. May form homodimer. May interact with host CEBPA, CFLAR, CREB1, DDB1, E4F1, HBXIP, HSPD1/HSP60, NFKBIA, POLR2E and SMAD4. Interacts with host SMC5-SMC6 complex and induces its degradation. Interacts with host TRPC4AP; leading to prevent ubiquitination of TRPC4AP. Interacts with host PLSCR1; this interaction promotes ubiquitination and degradation of HBx and impairs HBx-mediated cell proliferation. Post-translationally, a fraction may be phosphorylated in insect cells and HepG2 cells, a human hepatoblastoma cell line. Phosphorylated in vitro by host protein kinase C or mitogen-activated protein kinase. N-acetylated in insect cells.

Its subcellular location is the host cytoplasm. The protein localises to the host nucleus. It is found in the host mitochondrion. Multifunctional protein that plays a role in silencing host antiviral defenses and promoting viral transcription. Does not seem to be essential for HBV infection. May be directly involved in development of cirrhosis and liver cancer (hepatocellular carcinoma). Most of cytosolic activities involve modulation of cytosolic calcium. The effect on apoptosis is controversial depending on the cell types in which the studies have been conducted. May induce apoptosis by localizing in mitochondria and causing loss of mitochondrial membrane potential. May also modulate apoptosis by binding host CFLAR, a key regulator of the death-inducing signaling complex (DISC). Promotes viral transcription by using the host E3 ubiquitin ligase DDB1 to target the SMC5-SMC6 complex to proteasomal degradation. This host complex would otherwise bind to viral episomal DNA, and prevents its transcription. Moderately stimulates transcription of many different viral and cellular transcription elements. Promoters and enhancers stimulated by HBx contain DNA binding sites for NF-kappa-B, AP-1, AP-2, c-EBP, ATF/CREB, or the calcium-activated factor NF-AT. This chain is Protein X, found in Hepatitis B virus genotype A3 (isolate Cameroon/CMR983/1994) (HBV-A).